Here is a 136-residue protein sequence, read N- to C-terminus: Globin-2 (136 aa).

A Globin domain is found at 1 to 134; sequence VSQADIAAVQ…ILSQMKIALS (134 aa). H89 provides a ligand contact to heme b.

It belongs to the globin family. As to quaternary structure, homodimer.

The chain is Globin-2 from Phreagena soyoae (Deep-sea cold-seep clam).